The primary structure comprises 789 residues: Ribonucleoside-diphosphate reductase large subunit (789 aa).

Substrate is bound by residues T207, 222 to 223 (SC), G253, 435 to 439 (NLCTE), and 620 to 624 (PTVSS). A disulfide bridge links C223 with C452. N435 functions as the Proton acceptor in the catalytic mechanism. C437 functions as the Cysteine radical intermediate in the catalytic mechanism. E439 serves as the catalytic Proton acceptor.

It belongs to the ribonucleoside diphosphate reductase large chain family. As to quaternary structure, heterotetramer composed of a homodimer of the large subunit (R1) and a homodimer of the small subunit (R2). Larger multisubunit protein complex are also active, composed of (R1)n(R2)n.

It carries out the reaction a 2'-deoxyribonucleoside 5'-diphosphate + [thioredoxin]-disulfide + H2O = a ribonucleoside 5'-diphosphate + [thioredoxin]-dithiol. Functionally, ribonucleoside-diphosphate reductase holoenzyme provides the precursors necessary for viral DNA synthesis. Allows virus growth in non-dividing cells, as well as reactivation from latency in infected hosts. Catalyzes the biosynthesis of deoxyribonucleotides from the corresponding ribonucleotides. This chain is Ribonucleoside-diphosphate reductase large subunit, found in Equus caballus (Horse).